Consider the following 1386-residue polypeptide: DNA-directed RNA polymerase subunit beta (1386 aa).

Belongs to the RNA polymerase beta chain family. In plastids the minimal PEP RNA polymerase catalytic core is composed of four subunits: alpha, beta, beta', and beta''. When a (nuclear-encoded) sigma factor is associated with the core the holoenzyme is formed, which can initiate transcription.

The protein localises to the plastid. It localises to the chloroplast. The catalysed reaction is RNA(n) + a ribonucleoside 5'-triphosphate = RNA(n+1) + diphosphate. In terms of biological role, DNA-dependent RNA polymerase catalyzes the transcription of DNA into RNA using the four ribonucleoside triphosphates as substrates. The polypeptide is DNA-directed RNA polymerase subunit beta (Thalassiosira pseudonana (Marine diatom)).